Here is a 351-residue protein sequence, read N- to C-terminus: Phospho-N-acetylmuramoyl-pentapeptide-transferase (351 aa).

Transmembrane regions (helical) follow at residues 17 to 37, 62 to 82, 85 to 105, 130 to 150, 158 to 178, 190 to 210, 230 to 250, 254 to 274, 279 to 299, and 328 to 348; these read MAYATIFAFLLSLIVGPYIIL, GIPTMGGILIFFCVFISLVFW, ILNVYFLIMVFVMLGFAFLGF, IIFSFFSVGILYYFGGEHVSV, SFQIDLGLFYIPFGMFILISA, GLAIGLSIVITGALIIIAYLT, LVIFLGALLGGSFGFLWFNAY, IMMGDTGSLALGAILGMAALI, ILFSILAGVFIIETMSVIIQV, and QVVIRFWIIGLIFAIIALSTI.

Belongs to the glycosyltransferase 4 family. MraY subfamily. Mg(2+) serves as cofactor.

The protein resides in the cell inner membrane. The enzyme catalyses UDP-N-acetyl-alpha-D-muramoyl-L-alanyl-gamma-D-glutamyl-meso-2,6-diaminopimeloyl-D-alanyl-D-alanine + di-trans,octa-cis-undecaprenyl phosphate = di-trans,octa-cis-undecaprenyl diphospho-N-acetyl-alpha-D-muramoyl-L-alanyl-D-glutamyl-meso-2,6-diaminopimeloyl-D-alanyl-D-alanine + UMP. Its pathway is cell wall biogenesis; peptidoglycan biosynthesis. Catalyzes the initial step of the lipid cycle reactions in the biosynthesis of the cell wall peptidoglycan: transfers peptidoglycan precursor phospho-MurNAc-pentapeptide from UDP-MurNAc-pentapeptide onto the lipid carrier undecaprenyl phosphate, yielding undecaprenyl-pyrophosphoryl-MurNAc-pentapeptide, known as lipid I. This Borreliella burgdorferi (strain ATCC 35210 / DSM 4680 / CIP 102532 / B31) (Borrelia burgdorferi) protein is Phospho-N-acetylmuramoyl-pentapeptide-transferase.